The following is a 507-amino-acid chain: Extracellular elastase (507 aa).

The signal sequence occupies residues 1-28 (MKNFSKFALTSIAALTVASPLVNTEVDA). The propeptide occupies 29–207 (KDKVSATQNI…VVDKLNMIKE (179 aa)). Position 347 (D347) interacts with Ca(2+). Residue H351 participates in Zn(2+) binding. The active site involves E352. H355 and E375 together coordinate Zn(2+). 9 residues coordinate Ca(2+): D386, E388, D389, L391, E394, Y397, T398, V401, and D404. The active-site Proton donor is H435.

The protein belongs to the peptidase M4 family. Ca(2+) is required as a cofactor. The cofactor is Zn(2+).

The protein resides in the secreted. In terms of biological role, protease that has a low substrate specificity. Glucagon is preferentially cleaved between aromatic (Phe) and hydrophobic (Val) amino acids. Hydrolyzes casein and elastin. The protein is Extracellular elastase (sepA) of Staphylococcus epidermidis.